A 238-amino-acid polypeptide reads, in one-letter code: Probable transcriptional regulatory protein IL0164 (238 aa).

This sequence belongs to the TACO1 family.

It localises to the cytoplasm. In Idiomarina loihiensis (strain ATCC BAA-735 / DSM 15497 / L2-TR), this protein is Probable transcriptional regulatory protein IL0164.